Here is a 255-residue protein sequence, read N- to C-terminus: 5-oxoprolinase subunit A (255 aa).

It belongs to the LamB/PxpA family. As to quaternary structure, forms a complex composed of PxpA, PxpB and PxpC.

The enzyme catalyses 5-oxo-L-proline + ATP + 2 H2O = L-glutamate + ADP + phosphate + H(+). Catalyzes the cleavage of 5-oxoproline to form L-glutamate coupled to the hydrolysis of ATP to ADP and inorganic phosphate. This is 5-oxoprolinase subunit A from Clostridium kluyveri (strain ATCC 8527 / DSM 555 / NBRC 12016 / NCIMB 10680 / K1).